The following is a 393-amino-acid chain: Putative cytochrome P450 143 (393 aa).

Cys342 is a heme binding site.

This sequence belongs to the cytochrome P450 family. Heme serves as cofactor.

The sequence is that of Putative cytochrome P450 143 (cyp143) from Mycobacterium bovis (strain ATCC BAA-935 / AF2122/97).